The primary structure comprises 322 residues: tRNA-dihydrouridine(16) synthase (322 aa).

Residues 7–9 (PME) and Gln-68 each bind FMN. The active-site Proton donor is Cys-98. Residues Lys-139, 200–202 (NGE), and 224–225 (CR) contribute to the FMN site.

It belongs to the Dus family. DusC subfamily. Requires FMN as cofactor.

It carries out the reaction 5,6-dihydrouridine(16) in tRNA + NADP(+) = uridine(16) in tRNA + NADPH + H(+). The catalysed reaction is 5,6-dihydrouridine(16) in tRNA + NAD(+) = uridine(16) in tRNA + NADH + H(+). Functionally, catalyzes the synthesis of 5,6-dihydrouridine (D), a modified base found in the D-loop of most tRNAs, via the reduction of the C5-C6 double bond in target uridines. Specifically modifies U16 in tRNAs. This Vibrio parahaemolyticus serotype O3:K6 (strain RIMD 2210633) protein is tRNA-dihydrouridine(16) synthase.